A 156-amino-acid polypeptide reads, in one-letter code: Small ribosomal subunit protein uS7 (156 aa).

It belongs to the universal ribosomal protein uS7 family. Part of the 30S ribosomal subunit. Contacts proteins S9 and S11.

In terms of biological role, one of the primary rRNA binding proteins, it binds directly to 16S rRNA where it nucleates assembly of the head domain of the 30S subunit. Is located at the subunit interface close to the decoding center, probably blocks exit of the E-site tRNA. This is Small ribosomal subunit protein uS7 from Pseudarthrobacter chlorophenolicus (strain ATCC 700700 / DSM 12829 / CIP 107037 / JCM 12360 / KCTC 9906 / NCIMB 13794 / A6) (Arthrobacter chlorophenolicus).